Consider the following 412-residue polypeptide: Multifunctional CCA protein (412 aa).

The ATP site is built by G8 and R11. G8 and R11 together coordinate CTP. Positions 21 and 23 each coordinate Mg(2+). The ATP site is built by R91, R137, and R140. Residues R91, R137, and R140 each contribute to the CTP site. In terms of domain architecture, HD spans 228 to 329; the sequence is TGIHTLMTLS…VKLFDSIDAW (102 aa).

Belongs to the tRNA nucleotidyltransferase/poly(A) polymerase family. Bacterial CCA-adding enzyme type 1 subfamily. In terms of assembly, monomer. Can also form homodimers and oligomers. Mg(2+) is required as a cofactor. Ni(2+) serves as cofactor.

The enzyme catalyses a tRNA precursor + 2 CTP + ATP = a tRNA with a 3' CCA end + 3 diphosphate. It carries out the reaction a tRNA with a 3' CCA end + 2 CTP + ATP = a tRNA with a 3' CCACCA end + 3 diphosphate. Its function is as follows. Catalyzes the addition and repair of the essential 3'-terminal CCA sequence in tRNAs without using a nucleic acid template. Adds these three nucleotides in the order of C, C, and A to the tRNA nucleotide-73, using CTP and ATP as substrates and producing inorganic pyrophosphate. tRNA 3'-terminal CCA addition is required both for tRNA processing and repair. Also involved in tRNA surveillance by mediating tandem CCA addition to generate a CCACCA at the 3' terminus of unstable tRNAs. While stable tRNAs receive only 3'-terminal CCA, unstable tRNAs are marked with CCACCA and rapidly degraded. This Escherichia coli (strain SMS-3-5 / SECEC) protein is Multifunctional CCA protein.